The chain runs to 249 residues: Acetylglutamate kinase (249 aa).

Substrate-binding positions include 38-39 (GG), R60, and N147.

This sequence belongs to the acetylglutamate kinase family. ArgB subfamily.

It is found in the cytoplasm. It carries out the reaction N-acetyl-L-glutamate + ATP = N-acetyl-L-glutamyl 5-phosphate + ADP. It participates in amino-acid biosynthesis; L-arginine biosynthesis; N(2)-acetyl-L-ornithine from L-glutamate: step 2/4. Catalyzes the ATP-dependent phosphorylation of N-acetyl-L-glutamate. This is Acetylglutamate kinase from Deinococcus radiodurans (strain ATCC 13939 / DSM 20539 / JCM 16871 / CCUG 27074 / LMG 4051 / NBRC 15346 / NCIMB 9279 / VKM B-1422 / R1).